The sequence spans 141 residues: Hemoglobin subunit alpha-D/D' (141 aa).

Residues 1–141 (MLTADDKKLI…VAAVLAEKYR (141 aa)) form the Globin domain. Heme b is bound by residues His-58 and His-87.

Belongs to the globin family. In terms of assembly, heterotetramer of two alpha-D chains and two beta chains. As to expression, red blood cells.

Functionally, involved in oxygen transport from the lung to the various peripheral tissues. The chain is Hemoglobin subunit alpha-D/D' (HBAD) from Gyps rueppelli (Rueppell's griffon).